Consider the following 408-residue polypeptide: MAVNLQIPSESEILPVAGVEIGVAEAGIRKAGRRDLTVFRLAPGSAVAGVFTRNRFRAAPVQVCEAHLAQGGPIRALVVNTGNANAGTGAPGLKNAQDTCAALGKLLDVPAEQILPFSTGVILEPLPMDRLTAGLPAAVADLRADGWYGAAHGIMTTDTLPKIHSRRVNIGGKTVTITGISKGAGMIRPNMATMLGFLATDAGIAQPLLRQLAIELADVSFNRITVDGDTSTNDSFILIATGQAGVTVDSAGDAAYAALRDALAAAATDLAQKIVRDAEGATKFMTIRVEEAGNTEEALKVAYAVAHSPLVKTAFFASDPNLGRILAAIGYAGIDDLDVSRLRLWLGDVLVAVDGGRNPDYQEADGQRVMKQAEILVRIALGRGQVADTVYTCDFSHEYVTINADYRS.

Substrate contacts are provided by T156, K182, T193, E279, N403, and S408. T193 functions as the Nucleophile in the catalytic mechanism.

Belongs to the ArgJ family. As to quaternary structure, heterotetramer of two alpha and two beta chains.

Its subcellular location is the cytoplasm. It catalyses the reaction N(2)-acetyl-L-ornithine + L-glutamate = N-acetyl-L-glutamate + L-ornithine. It carries out the reaction L-glutamate + acetyl-CoA = N-acetyl-L-glutamate + CoA + H(+). Its pathway is amino-acid biosynthesis; L-arginine biosynthesis; L-ornithine and N-acetyl-L-glutamate from L-glutamate and N(2)-acetyl-L-ornithine (cyclic): step 1/1. The protein operates within amino-acid biosynthesis; L-arginine biosynthesis; N(2)-acetyl-L-ornithine from L-glutamate: step 1/4. In terms of biological role, catalyzes two activities which are involved in the cyclic version of arginine biosynthesis: the synthesis of N-acetylglutamate from glutamate and acetyl-CoA as the acetyl donor, and of ornithine by transacetylation between N(2)-acetylornithine and glutamate. This chain is Arginine biosynthesis bifunctional protein ArgJ, found in Bordetella pertussis (strain Tohama I / ATCC BAA-589 / NCTC 13251).